Reading from the N-terminus, the 453-residue chain is Allantoinase (453 aa).

Positions 59, 61, 146, 186, 242, and 315 each coordinate Zn(2+). Lys146 carries the post-translational modification N6-carboxylysine.

It belongs to the metallo-dependent hydrolases superfamily. Allantoinase family. In terms of assembly, homotetramer. Requires Zn(2+) as cofactor. In terms of processing, carboxylation allows a single lysine to coordinate two zinc ions.

It catalyses the reaction (S)-allantoin + H2O = allantoate + H(+). It functions in the pathway nitrogen metabolism; (S)-allantoin degradation; allantoate from (S)-allantoin: step 1/1. Its function is as follows. Catalyzes the conversion of allantoin (5-ureidohydantoin) to allantoic acid by hydrolytic cleavage of the five-member hydantoin ring. The sequence is that of Allantoinase from Salmonella paratyphi B (strain ATCC BAA-1250 / SPB7).